Reading from the N-terminus, the 284-residue chain is 2-dehydro-3-deoxyphosphooctonate aldolase (284 aa).

The protein belongs to the KdsA family.

The protein localises to the cytoplasm. The enzyme catalyses D-arabinose 5-phosphate + phosphoenolpyruvate + H2O = 3-deoxy-alpha-D-manno-2-octulosonate-8-phosphate + phosphate. Its pathway is carbohydrate biosynthesis; 3-deoxy-D-manno-octulosonate biosynthesis; 3-deoxy-D-manno-octulosonate from D-ribulose 5-phosphate: step 2/3. The protein operates within bacterial outer membrane biogenesis; lipopolysaccharide biosynthesis. The protein is 2-dehydro-3-deoxyphosphooctonate aldolase of Yersinia pseudotuberculosis serotype O:1b (strain IP 31758).